We begin with the raw amino-acid sequence, 181 residues long: CDP-archaeol synthase (181 aa).

A run of 5 helical transmembrane segments spans residues 7 to 27 (VVVAVWAMLPAYVPNNAAVLA), 55 to 75 (AVGTAAGVALAVALNALRPAA), 80 to 100 (GVVLPAFPPAAMGTLAFGAMV), 128 to 148 (FVVVALALTALAVPAWVGDTF), and 150 to 170 (LPVLVTVAVLTPALHLLTNGI).

It belongs to the CDP-archaeol synthase family. Mg(2+) serves as cofactor.

The protein localises to the cell membrane. It catalyses the reaction 2,3-bis-O-(geranylgeranyl)-sn-glycerol 1-phosphate + CTP + H(+) = CDP-2,3-bis-O-(geranylgeranyl)-sn-glycerol + diphosphate. It participates in membrane lipid metabolism; glycerophospholipid metabolism. Functionally, catalyzes the formation of CDP-2,3-bis-(O-geranylgeranyl)-sn-glycerol (CDP-archaeol) from 2,3-bis-(O-geranylgeranyl)-sn-glycerol 1-phosphate (DGGGP) and CTP. This reaction is the third ether-bond-formation step in the biosynthesis of archaeal membrane lipids. In Halobacterium salinarum (strain ATCC 29341 / DSM 671 / R1), this protein is CDP-archaeol synthase.